We begin with the raw amino-acid sequence, 413 residues long: Cardiolipin synthase B (413 aa).

PLD phosphodiesterase domains lie at 108 to 135 (IFRRMHRKIVVIDDRIAFVGGINYSAEH) and 285 to 312 (RRRPLHGKVALMDDHWATVGSSNLDPLS). Catalysis depends on residues H113, K115, D120, H290, K292, and D297. Positions 388–413 (AQVPPPAQPEMETQDRVDPENTGVKP) are disordered.

Belongs to the phospholipase D family. Cardiolipin synthase subfamily. ClsB sub-subfamily.

The protein resides in the cell membrane. The catalysed reaction is 2 a 1,2-diacyl-sn-glycero-3-phospho-(1'-sn-glycerol) = a cardiolipin + glycerol. In terms of biological role, catalyzes the phosphatidyl group transfer from one phosphatidylglycerol molecule to another to form cardiolipin (CL) (diphosphatidylglycerol) and glycerol. The protein is Cardiolipin synthase B of Salmonella typhimurium (strain LT2 / SGSC1412 / ATCC 700720).